The primary structure comprises 844 residues: 3',5'-cyclic-AMP phosphodiesterase 4A (844 aa).

The segment at 1 to 124 (MEPPAAPSER…RSPLDSQASP (124 aa)) is disordered. A Phosphoserine modification is found at Ser13. Residues 36 to 46 (QPRTPIRIQQR) show a composition bias toward low complexity. The span at 51 to 78 (SAERSEPERSPHRPIERADAVDTGDRPG) shows a compositional bias: basic and acidic residues. The segment covering 82–91 (TRMSWPSSFH) has biased composition (polar residues). Ser147, Ser152, Ser160, Ser204, and Ser333 each carry phosphoserine. A PDEase domain is found at 343–672 (VKTDQEDLLA…DWYHSAIRQS (330 aa)). A Glycyl lysine isopeptide (Lys-Gly) (interchain with G-Cter in SUMO) cross-link involves residue Lys344. The active-site Proton donor is the His419. 3',5'-cyclic AMP is bound at residue His419. His419 and His423 together coordinate AMP. Zn(2+) is bound by residues His423, His459, Asp460, and Asp577. Residues Asp460, Asp577, Gln628, and Phe631 each contribute to the AMP site. Asp460 is a binding site for Mg(2+). Asp460 is a binding site for Mn(2+). Positions 628 and 631 each coordinate 3',5'-cyclic AMP. 2 positions are modified to phosphoserine: Ser672 and Ser674. A disordered region spans residues 819–844 (ACSGTSGDNSAVISAPGRWGSGGDPA). Residues 820–830 (CSGTSGDNSAV) are compositionally biased toward polar residues.

This sequence belongs to the cyclic nucleotide phosphodiesterase family. PDE4 subfamily. Interacts with LYN (via SH3 domain). Interacts with ARRB2. The cofactor is Zn(2+). Requires Mg(2+) as cofactor. Mn(2+) serves as cofactor. Proteolytically cleaved by CASP3.

The protein localises to the cytoplasm. The protein resides in the cytosol. Its subcellular location is the membrane. It carries out the reaction 3',5'-cyclic AMP + H2O = AMP + H(+). It participates in purine metabolism; 3',5'-cyclic AMP degradation; AMP from 3',5'-cyclic AMP: step 1/1. With respect to regulation, inhibited by rolipram and diazepam. In terms of biological role, hydrolyzes the second messenger 3',5'-cyclic AMP (cAMP), which is a key regulator of many important physiological processes. Its function is as follows. Efficiently hydrolyzes cAMP. In Mus musculus (Mouse), this protein is 3',5'-cyclic-AMP phosphodiesterase 4A (Pde4a).